The chain runs to 204 residues: MEHAEHGNSNAPMEYQSETGRLNILGFWIFLGAEIVLFSTLFATFFVLKNRTAGGVLPDELFEVNLVMIMTFLLLISSFTCGIAVHEMRRGSLKGVVIWTIITLLLGAGFVGCEINEFVHYVHEGAALSTSAFWSGFFVLLGTHGTHVTIGIFWITGILIQLKKRGLTPQTSSKIFISSLYWHFLDVVWIFIFTGVYLMGLGGL.

The next 6 membrane-spanning stretches (helical) occupy residues 27–47 (FWIF…TFFV), 66–86 (LVMI…IAVH), 95–115 (GVVI…GCEI), 118–138 (FVHY…SGFF), 140–160 (LLGT…GILI), and 184–204 (FLDV…LGGL).

The protein belongs to the cytochrome c oxidase subunit 3 family.

It is found in the cell membrane. It carries out the reaction 2 a quinol + O2 = 2 a quinone + 2 H2O. Its function is as follows. Catalyzes quinol oxidation with the concomitant reduction of oxygen to water. Major component for energy conversion during vegetative growth. The sequence is that of Quinol oxidase subunit 3 (qoxC) from Bacillus subtilis (strain 168).